The chain runs to 2287 residues: Protein Ycf2 (2287 aa).

Position 1641 to 1648 (1641 to 1648 (GSIGTGRS)) interacts with ATP.

It belongs to the Ycf2 family.

It localises to the plastid. The protein localises to the chloroplast stroma. In terms of biological role, probable ATPase of unknown function. Its presence in a non-photosynthetic plant (Epifagus virginiana) and experiments in tobacco indicate that it has an essential function which is probably not related to photosynthesis. The sequence is that of Protein Ycf2 from Lepidium virginicum (Virginia pepperweed).